Reading from the N-terminus, the 476-residue chain is Aspartyl/glutamyl-tRNA(Asn/Gln) amidotransferase subunit B (476 aa).

The protein belongs to the GatB/GatE family. GatB subfamily. As to quaternary structure, heterotrimer of A, B and C subunits.

The catalysed reaction is L-glutamyl-tRNA(Gln) + L-glutamine + ATP + H2O = L-glutaminyl-tRNA(Gln) + L-glutamate + ADP + phosphate + H(+). It catalyses the reaction L-aspartyl-tRNA(Asn) + L-glutamine + ATP + H2O = L-asparaginyl-tRNA(Asn) + L-glutamate + ADP + phosphate + 2 H(+). Functionally, allows the formation of correctly charged Asn-tRNA(Asn) or Gln-tRNA(Gln) through the transamidation of misacylated Asp-tRNA(Asn) or Glu-tRNA(Gln) in organisms which lack either or both of asparaginyl-tRNA or glutaminyl-tRNA synthetases. The reaction takes place in the presence of glutamine and ATP through an activated phospho-Asp-tRNA(Asn) or phospho-Glu-tRNA(Gln). The chain is Aspartyl/glutamyl-tRNA(Asn/Gln) amidotransferase subunit B from Neisseria meningitidis serogroup C / serotype 2a (strain ATCC 700532 / DSM 15464 / FAM18).